A 90-amino-acid chain; its full sequence is Small ribosomal subunit protein uS17 (90 aa).

Belongs to the universal ribosomal protein uS17 family. Part of the 30S ribosomal subunit.

Functionally, one of the primary rRNA binding proteins, it binds specifically to the 5'-end of 16S ribosomal RNA. The polypeptide is Small ribosomal subunit protein uS17 (Burkholderia cenocepacia (strain ATCC BAA-245 / DSM 16553 / LMG 16656 / NCTC 13227 / J2315 / CF5610) (Burkholderia cepacia (strain J2315))).